Reading from the N-terminus, the 2947-residue chain is 3'-5' exoribonuclease HELZ2 (2947 aa).

The C3H1-type 1 zinc finger occupies 85–114; sequence PMRYQVCHYYRPGLGCRRHWNRCTFARSPE. The C2H2-type zinc-finger motif lies at 167 to 187; sequence CFTCCPPCLCPVDPRGHCPKH. The C3H1-type 2 zinc finger occupies 221 to 245; sequence YCMYVGRGVPCRHGASRCEYAHSAV. Residues 289 to 311 form a C2H2-type; atypical zinc finger; it reads CHACLVTCNSQEAFENHCSSLEH. In terms of domain architecture, UvrD-like helicase ATP-binding spans 769–1317; that stretch reads VGLIAGRRPE…ELLDESQQVT (549 aa). Position 790-797 (790-797) interacts with ATP; the sequence is GPFGTGKT. The segment at 809–1290 is interaction with THRAP3; the sequence is QQPHTKVLIC…GGMSEEDSES (482 aa). Positions 913–916 match the DEAA box motif; sequence DEAA. Residues 1260 to 1292 form a disordered region; that stretch reads EDTASGNSASRDAAAEVSTLEGGMSEEDSESDF. 4 consecutive short sequence motifs (LXXLL motif) follow at residues 1306 to 1310, 1348 to 1352, 1403 to 1407, and 2240 to 2244; these read LKELL, LWKFL, LVQIL, and LEGLP. Omega-N-methylarginine is present on Arg-2381. The interval 2413–2947 is interaction with THRAP3; sequence PEPCRGNWPR…RVQRKSALSS (535 aa). The UvrD-like helicase ATP-binding 2 domain maps to 2449 to 2726; it reads LNQSQDRAVR…IMLDTQYRMH (278 aa). 2470–2477 provides a ligand contact to ATP; sequence GPPGTGKT. The LXXLL motif 5 signature appears at 2525-2529; that stretch reads LGGLL.

It belongs to the DNA2/NAM7 helicase family. In terms of assembly, interacts with PPARA (via DNA-binding domain) and PPARG; the interaction stimulates the transcriptional activity of PPARA and PPARG. Interacts with THRAP3; the interaction is direct and HELZ2 and THRAP3 synergistically enhance the transcriptional activity of PPARG. It is probably part of the peroxisome proliferator activated receptor alpha interacting complex (PRIC).

The protein resides in the cytoplasm. The enzyme catalyses Exonucleolytic cleavage in the 3'- to 5'-direction to yield nucleoside 5'-phosphates.. The catalysed reaction is ATP + H2O = ADP + phosphate + H(+). Its function is as follows. Can degrade highly structured RNAs through its concerted ATP-dependent RNA helicase and 3' to 5' exoribonuclease activities. Shows a strong preference for pyrimidine over purine residues for its nuclease activity. Acts as a transcriptional coactivator for a number of nuclear receptors including PPARA, PPARG, THRA, THRB and RXRA. This chain is 3'-5' exoribonuclease HELZ2 (Helz2), found in Mus musculus (Mouse).